A 413-amino-acid chain; its full sequence is N-acylneuraminate cytidylyltransferase (413 aa).

It belongs to the CMP-NeuNAc synthase family. Mg(2+) is required as a cofactor. The cofactor is Mn(2+).

The protein resides in the cytoplasm. It carries out the reaction an N-acylneuraminate + CTP = a CMP-N-acyl-beta-neuraminate + diphosphate. In terms of biological role, catalyzes the formation of CMP-N-acetylneuraminic acid (CMP-NeuNAc), which is essential for the formation of the capsule. The chain is N-acylneuraminate cytidylyltransferase (neuA) from Streptococcus agalactiae serotype Ia (strain ATCC 27591 / A909 / CDC SS700).